Reading from the N-terminus, the 238-residue chain is NAD(P)H-hydrate epimerase (238 aa).

Positions 11–217 (AAALDKDLMS…EIHQKYNLQL (207 aa)) constitute a YjeF N-terminal domain. 61–65 (NNGGD) provides a ligand contact to (6S)-NADPHX. K(+) is bound by residues asparagine 62 and aspartate 123. (6S)-NADPHX contacts are provided by residues 127–133 (GFSFTGS) and aspartate 156. K(+) is bound at residue serine 159.

The protein belongs to the NnrE/AIBP family. K(+) serves as cofactor.

The protein resides in the cytoplasm. It localises to the mitochondrion. The catalysed reaction is (6R)-NADHX = (6S)-NADHX. It catalyses the reaction (6R)-NADPHX = (6S)-NADPHX. In terms of biological role, catalyzes the epimerization of the S- and R-forms of NAD(P)HX, a damaged form of NAD(P)H that is a result of enzymatic or heat-dependent hydration. This is a prerequisite for the S-specific NAD(P)H-hydrate dehydratase to allow the repair of both epimers of NAD(P)HX. This chain is NAD(P)H-hydrate epimerase, found in Sclerotinia sclerotiorum (strain ATCC 18683 / 1980 / Ss-1) (White mold).